The sequence spans 448 residues: Homogentisate 1,2-dioxygenase (448 aa).

The active-site Proton acceptor is histidine 303. Fe cation-binding residues include histidine 346 and glutamate 352. 2 residues coordinate homogentisate: tyrosine 361 and histidine 382. Histidine 382 provides a ligand contact to Fe cation.

This sequence belongs to the homogentisate dioxygenase family. As to quaternary structure, hexamer; dimer of trimers. Fe cation serves as cofactor.

It carries out the reaction homogentisate + O2 = 4-maleylacetoacetate + H(+). It functions in the pathway amino-acid degradation; L-phenylalanine degradation; acetoacetate and fumarate from L-phenylalanine: step 4/6. Functionally, involved in the catabolism of homogentisate (2,5-dihydroxyphenylacetate or 2,5-OH-PhAc), a central intermediate in the degradation of phenylalanine and tyrosine. Catalyzes the oxidative ring cleavage of the aromatic ring of homogentisate to yield maleylacetoacetate. This chain is Homogentisate 1,2-dioxygenase, found in Rhodopseudomonas palustris (strain HaA2).